Consider the following 317-residue polypeptide: Protein IRX15-LIKE (317 aa).

A helical transmembrane segment spans residues 27 to 47; the sequence is LWLLAFVSFFTIAFLLTLLYT.

As to expression, expressed in roots, rosette leaves, stems and siliques. Expressed in the xylem.

The protein resides in the golgi apparatus membrane. Required for xylan biosynthesis, but not directly involved in catalyzing the addition of sugars to the growing polymer. The chain is Protein IRX15-LIKE (IRX15-L) from Arabidopsis thaliana (Mouse-ear cress).